Here is a 171-residue protein sequence, read N- to C-terminus: Large ribosomal subunit protein uL10 (171 aa).

Belongs to the universal ribosomal protein uL10 family. As to quaternary structure, part of the ribosomal stalk of the 50S ribosomal subunit. The N-terminus interacts with L11 and the large rRNA to form the base of the stalk. The C-terminus forms an elongated spine to which L12 dimers bind in a sequential fashion forming a multimeric L10(L12)X complex.

Its function is as follows. Forms part of the ribosomal stalk, playing a central role in the interaction of the ribosome with GTP-bound translation factors. This Rhizorhabdus wittichii (strain DSM 6014 / CCUG 31198 / JCM 15750 / NBRC 105917 / EY 4224 / RW1) (Sphingomonas wittichii) protein is Large ribosomal subunit protein uL10.